The following is a 347-amino-acid chain: Phosphoribosylformylglycinamidine cyclo-ligase (347 aa).

This sequence belongs to the AIR synthase family.

The protein resides in the cytoplasm. The catalysed reaction is 2-formamido-N(1)-(5-O-phospho-beta-D-ribosyl)acetamidine + ATP = 5-amino-1-(5-phospho-beta-D-ribosyl)imidazole + ADP + phosphate + H(+). It functions in the pathway purine metabolism; IMP biosynthesis via de novo pathway; 5-amino-1-(5-phospho-D-ribosyl)imidazole from N(2)-formyl-N(1)-(5-phospho-D-ribosyl)glycinamide: step 2/2. In Dechloromonas aromatica (strain RCB), this protein is Phosphoribosylformylglycinamidine cyclo-ligase.